We begin with the raw amino-acid sequence, 402 residues long: Prophage integrase IntZ (402 aa).

A Core-binding (CB) domain is found at alanine 103–valine 183. Positions glycine 206–methionine 381 constitute a Tyr recombinase domain. Residues arginine 244, lysine 271, histidine 332, arginine 335, and histidine 359 contribute to the active site. Tyrosine 368 serves as the catalytic O-(3'-phospho-DNA)-tyrosine intermediate.

The protein belongs to the 'phage' integrase family.

Its function is as follows. Integrase is necessary for integration of the phage into the host genome by site-specific recombination. In conjunction with excisionase, integrase is also necessary for excision of the prophage from the host genome. This is Prophage integrase IntZ (intZ) from Escherichia coli (strain K12).